A 441-amino-acid chain; its full sequence is uncharacterized protein (441 aa).

This is an uncharacterized protein from Methanocaldococcus jannaschii (strain ATCC 43067 / DSM 2661 / JAL-1 / JCM 10045 / NBRC 100440) (Methanococcus jannaschii).